A 462-amino-acid polypeptide reads, in one-letter code: ATP synthase subunit beta (462 aa).

150–157 is an ATP binding site; it reads GGAGVGKT.

This sequence belongs to the ATPase alpha/beta chains family. In terms of assembly, F-type ATPases have 2 components, CF(1) - the catalytic core - and CF(0) - the membrane proton channel. CF(1) has five subunits: alpha(3), beta(3), gamma(1), delta(1), epsilon(1). CF(0) has three main subunits: a(1), b(2) and c(9-12). The alpha and beta chains form an alternating ring which encloses part of the gamma chain. CF(1) is attached to CF(0) by a central stalk formed by the gamma and epsilon chains, while a peripheral stalk is formed by the delta and b chains.

It is found in the cell membrane. The enzyme catalyses ATP + H2O + 4 H(+)(in) = ADP + phosphate + 5 H(+)(out). Functionally, produces ATP from ADP in the presence of a proton gradient across the membrane. The catalytic sites are hosted primarily by the beta subunits. The protein is ATP synthase subunit beta of Wigglesworthia glossinidia brevipalpis.